A 430-amino-acid polypeptide reads, in one-letter code: Asparagine--tRNA ligase (430 aa).

It belongs to the class-II aminoacyl-tRNA synthetase family. In terms of assembly, homodimer.

It localises to the cytoplasm. The enzyme catalyses tRNA(Asn) + L-asparagine + ATP = L-asparaginyl-tRNA(Asn) + AMP + diphosphate + H(+). This Staphylococcus aureus (strain MSSA476) protein is Asparagine--tRNA ligase.